The primary structure comprises 381 residues: ELMO domain-containing protein 3 (381 aa).

The disordered stretch occupies residues 1–31 (MNEKSCSFHSKEELRDGQGERLSAGYSPSYD). The segment covering 9-19 (HSKEELRDGQG) has biased composition (basic and acidic residues). One can recognise an ELMO domain in the interval 170 to 324 (VHGRVLQTIY…ELEVLAKKSP (155 aa)).

Both isoform 1 and isoform 6 are widely expressed.

Its subcellular location is the cell projection. The protein localises to the stereocilium. It is found in the kinocilium. The protein resides in the cytoplasm. It localises to the cytoskeleton. Acts as a GTPase-activating protein (GAP) for ARL2 with low specific activity. The sequence is that of ELMO domain-containing protein 3 (ELMOD3) from Homo sapiens (Human).